The primary structure comprises 96 residues: Aspartyl/glutamyl-tRNA(Asn/Gln) amidotransferase subunit C (96 aa).

Belongs to the GatC family. Heterotrimer of A, B and C subunits.

The catalysed reaction is L-glutamyl-tRNA(Gln) + L-glutamine + ATP + H2O = L-glutaminyl-tRNA(Gln) + L-glutamate + ADP + phosphate + H(+). It carries out the reaction L-aspartyl-tRNA(Asn) + L-glutamine + ATP + H2O = L-asparaginyl-tRNA(Asn) + L-glutamate + ADP + phosphate + 2 H(+). Functionally, allows the formation of correctly charged Asn-tRNA(Asn) or Gln-tRNA(Gln) through the transamidation of misacylated Asp-tRNA(Asn) or Glu-tRNA(Gln) in organisms which lack either or both of asparaginyl-tRNA or glutaminyl-tRNA synthetases. The reaction takes place in the presence of glutamine and ATP through an activated phospho-Asp-tRNA(Asn) or phospho-Glu-tRNA(Gln). The protein is Aspartyl/glutamyl-tRNA(Asn/Gln) amidotransferase subunit C of Oceanobacillus iheyensis (strain DSM 14371 / CIP 107618 / JCM 11309 / KCTC 3954 / HTE831).